A 496-amino-acid polypeptide reads, in one-letter code: Iroquois-class homeodomain protein irx-4-A (496 aa).

Residues 141 to 203 (GSSRRKNATR…NARRRLKKEN (63 aa)) constitute a DNA-binding region (homeobox; TALE-type). Residues 203–246 (NKMTWPPRNKCSDEKRPYDEEEEEEEEEEDSQKATIKNEKKTVD) are disordered. Over residues 221 to 232 (DEEEEEEEEEED) the composition is skewed to acidic residues.

The protein belongs to the TALE/IRO homeobox family. As to expression, expressed in the neural plate in overlapping patterns with other irx members, which all share an anterior border of expression. At stage 20, expressed in a subset of cells in the developing hindbrain with expression appearing above the otic vesicle by stage 26. Expression in retina cells begins at stage 28, continuing at later stages and is limited to a subset of retinal cells of the optic cup. Also expressed in the ventricle of the heart from stage 36 (late tailbud) onwards. Only expressed in the pronephros at tadpole stage.

The protein resides in the nucleus. Acts partially redundantly with other irx members in neural patterning. Required for formation of the posterior forebrain, midbrain, hindbrain, and to a lesser extent, spinal cord. Patterns the neuroectoderm in both the anterior/posterior and dorsal/ventral axes. Does not appear to play a role in pronephros kidney development. The chain is Iroquois-class homeodomain protein irx-4-A (irx4-a) from Xenopus laevis (African clawed frog).